We begin with the raw amino-acid sequence, 997 residues long: Autophagy-related protein 9 (997 aa).

Topologically, residues 1–318 (MERDEYQLPN…DVYNYYLGNG (318 aa)) are cytoplasmic. At S19 the chain carries Phosphoserine. Polar residues predominate over residues 29–39 (VNPSLNSQEMS). A disordered region spans residues 29 to 88 (VNPSLNSQEMSNFPLPDIERGSSLLHSTNDSREDVDENDLRVPESDQGTSTEEEDEVDEE). The segment covering 79–88 (TEEEDEVDEE) has biased composition (acidic residues). Residues K113 and K121 each participate in a glycyl lysine isopeptide (Lys-Gly) (interchain with G-Cter in ubiquitin) cross-link. S122 is modified (phosphoserine). Disordered stretches follow at residues 127–159 (LVEG…DGFD) and 214–234 (HHDK…NQKH). K138 is covalently cross-linked (Glycyl lysine isopeptide (Lys-Gly) (interchain with G-Cter in ubiquitin)). S143 and S144 each carry phosphoserine. The span at 144-159 (SEEEEDNEFINNDGFD) shows a compositional bias: acidic residues. Residues 221–233 (ANNGPRNINGNQK) are compositionally biased toward polar residues. A helical membrane pass occupies residues 319–339 (FYCIILEKILNICTLLFVVFV). The Lumenal portion of the chain corresponds to 340-376 (STYMGHCVDYSKLPTSHRVSDIIIDKCYSNSITGFTK). The helical transmembrane segment at 377–397 (FFLWMFYFFVILKIVQLYFDV) threads the bilayer. Over 398 to 538 (QKLSELQNFY…EELQKRFMLA (141 aa)) the chain is Cytoplasmic. The stretch at 539-559 (GFLNIILAPFLVTYFVLLYFF) is an intramembrane region. Over 560–620 (RYFNEYKTSP…DQFPKEKTNL (61 aa)) the chain is Cytoplasmic. A helical transmembrane segment spans residues 621 to 641 (FLKFVSFICGSFVAILAFLTV). Topologically, residues 642 to 656 (FDPENFLNFEITSDR) are lumenal. S657 bears the Phosphoserine mark. A helical membrane pass occupies residues 657-677 (SVIFYITILGAIWSVSRNTIT). At 678–723 (QEYHVFDPEETLKELYEYTHYLPKEWEGRYHKEEIKLEFCKLYNLR) the chain is on the cytoplasmic side. A Glycyl lysine isopeptide (Lys-Gly) (interchain with G-Cter in ubiquitin) cross-link involves residue K701. The stretch at 724-744 (IVILLRELTSLMITPFVLWFS) is an intramembrane region. Residues 745–997 (LPSSAGRIVD…EYYKKSDVGR (253 aa)) are Cytoplasmic-facing. Phosphoserine occurs at positions 787 and 792. Residue T794 is modified to Phosphothreonine. The residue at position 802 (S802) is a Phosphoserine. Phosphothreonine is present on T804. Phosphoserine is present on residues S831, S842, S864, S948, and S969.

This sequence belongs to the ATG9 family. As to quaternary structure, homotrimer; forms a homotrimer with a central pore that forms a path between the two membrane leaflets. Interacts with ATG23 and ATG27 to form a cycling complex for trafficking to the PAS. Interacts (via N-terminus) with ATG11, required for recruitment of ATG9 to the PAS for the Cvt pathway during nutrient-rich conditions. Interacts (via N-terminus) with ATG17; required for recruitment to the PAS during autophagy and starved conditions. Interacts with ATG2 and ATG18; required for the retrieval of ATG9 from the PAS to the cytoplasmic pool. Interacts with ATG41. Interacts with the conserved oligomeric Golgi (COG) complex subunits COG3 and COG4. Interacts with TRS85. Phosphorylated by ATG1; phosphorylation is required for autophagy and cytoplasm to vacuole transport (Cvt) vesicle formation. Phosphorylation by ATG1 regulates ATG18 interaction and preautophagosome elongation. Phosphorylation at Ser-122 is required for selective autophagy by regulating anterograde trafficking and interaction with ATG23 and ATG27. Phosphorylation at Ser-122 prevents ubiquitination by the SCF(MET30) complex. Post-translationally, ubiquitinated by the SCF(MET30) complex in normal conditions, leading to its degradation by the proteasome, thereby preventing inappropriate induction of autophagy. Ubiquitination by the SCF(MET30) complex is prevented by phosphorylation at Ser-122.

The protein localises to the preautophagosomal structure membrane. It is found in the cytoplasmic vesicle membrane. The protein resides in the golgi apparatus membrane. Its subcellular location is the endoplasmic reticulum membrane. It localises to the mitochondrion membrane. The enzyme catalyses a 1,2-diacyl-sn-glycero-3-phosphocholine(in) = a 1,2-diacyl-sn-glycero-3-phosphocholine(out). It carries out the reaction a 1,2-diacyl-sn-glycero-3-phospho-L-serine(in) = a 1,2-diacyl-sn-glycero-3-phospho-L-serine(out). It catalyses the reaction a 1,2-diacyl-sn-glycero-3-phosphoethanolamine(in) = a 1,2-diacyl-sn-glycero-3-phosphoethanolamine(out). The catalysed reaction is a 1,2-diacyl-sn-glycero-3-phospho-(1D-myo-inositol-3-phosphate)(in) = a 1,2-diacyl-sn-glycero-3-phospho-(1D-myo-inositol-3-phosphate)(out). Phospholipid scramblase involved in autophagy and cytoplasm to vacuole transport (Cvt) vesicle formation. Cycles between the preautophagosomal structure/phagophore assembly site (PAS) and the cytoplasmic vesicle pool and supplies membrane for the growing autophagosome. Lipid scramblase activity plays a key role in preautophagosomal structure/phagophore assembly by distributing the phospholipids that arrive through ATG2 from the cytoplasmic to the luminal leaflet of the bilayer, thereby driving autophagosomal membrane expansion. Required for mitophagy. Also involved in endoplasmic reticulum-specific autophagic process and is essential for the survival of cells subjected to severe ER stress. Different machineries are required for anterograde trafficking to the PAS during either the Cvt pathway or bulk autophagy and for retrograde trafficking. Recruits vesicle-tethering proteins TRS85 and YPT1 to the autophagosome formation site. Also recruits ATG23 and ATG8 to the PAS. This is Autophagy-related protein 9 from Saccharomyces cerevisiae (strain YJM789) (Baker's yeast).